Reading from the N-terminus, the 496-residue chain is Maintenance of mitochondrial morphology protein 1 (496 aa).

At 1–22 (MSSQLNDPTPIPAQSSLSFTQG) the chain is on the lumenal side. Residues 23 to 43 (FLLGQLSVVLLIAAFIKFFIF) traverse the membrane as a helical segment. Residues 44 to 496 (GEAPPPPSRG…SLPGGGVTTT (453 aa)) lie on the Cytoplasmic side of the membrane. 4 disordered regions span residues 50–96 (PSRG…VPSS), 276–331 (PLDT…KSNV), 395–433 (GRTG…SREP), and 449–496 (DLAS…VTTT). The span at 54 to 64 (LSHRSATHRRS) shows a compositional bias: basic residues. Polar residues predominate over residues 65 to 74 (NSIYSSTQHD). A compositionally biased stretch (basic and acidic residues) spans 75–84 (GNTRTLREKP). The segment covering 85–96 (SNSNVLRPVPSS) has biased composition (polar residues). Positions 131–388 (QPESLDWFNV…EPRVQVVGLP (258 aa)) constitute an SMP-LTD domain. Residues 276–287 (PLDTPSHSPSPP) are compositionally biased toward pro residues. Residues 407–418 (TGSNAPRSSTAA) are compositionally biased toward polar residues. Basic and acidic residues-rich tracts occupy residues 424 to 433 (AHHEDSSREP) and 462 to 474 (GDLR…REES).

It belongs to the MMM1 family. As to quaternary structure, homodimer. Component of the ER-mitochondria encounter structure (ERMES) or MDM complex, composed of mmm1, mdm10, mdm12 and mdm34. A mmm1 homodimer associates with one molecule of mdm12 on each side in a pairwise head-to-tail manner, and the SMP-LTD domains of mmm1 and mdm12 generate a continuous hydrophobic tunnel for phospholipid trafficking.

Its subcellular location is the endoplasmic reticulum membrane. In terms of biological role, component of the ERMES/MDM complex, which serves as a molecular tether to connect the endoplasmic reticulum (ER) and mitochondria. Components of this complex are involved in the control of mitochondrial shape and protein biogenesis, and function in nonvesicular lipid trafficking between the ER and mitochondria. The mdm12-mmm1 subcomplex functions in the major beta-barrel assembly pathway that is responsible for biogenesis of all outer membrane beta-barrel proteins, and acts in a late step after the SAM complex. The mdm10-mdm12-mmm1 subcomplex further acts in the TOM40-specific pathway after the action of the mdm12-mmm1 complex. Essential for establishing and maintaining the structure of mitochondria and maintenance of mtDNA nucleoids. The chain is Maintenance of mitochondrial morphology protein 1 from Neosartorya fischeri (strain ATCC 1020 / DSM 3700 / CBS 544.65 / FGSC A1164 / JCM 1740 / NRRL 181 / WB 181) (Aspergillus fischerianus).